The chain runs to 764 residues: DNA-binding protein SATB1 (764 aa).

Over residues 1 to 15 (MDHLNEATQGKEHSE) the composition is skewed to basic and acidic residues. The disordered stretch occupies residues 1 to 56 (MDHLNEATQGKEHSEMSNNVSDPKGPPAKIARLEQNGSPLGRGRLGSTGGKMQGVP). The short motif at 20 to 40 (VSDPKGPPAKIARLEQNGSPL) is the Nuclear localization signal element. Positions 43 to 52 (GRLGSTGGKM) are enriched in gly residues. Lysine 51 participates in a covalent cross-link: Glycyl lysine isopeptide (Lys-Gly) (interchain with G-Cter in SUMO2). In terms of domain architecture, CMP spans 71–172 (GTMLPVFCVV…VVTLKIQLHS (102 aa)). N6-acetyllysine is present on lysine 136. The short motif at 139 to 143 (PVPLS) is the Protein interaction element. One can recognise a CUTL domain in the interval 175 to 248 (KLEDLPPEQW…WYKHFKKTKD (74 aa)). Serine 185 is modified (phosphoserine). A nuclear matrix targeting sequence (NMTS) region spans residues 224–278 (YYANVSAAKCQEFGRWYKHFKKTKDMMVEMDSLSELSQQGANHVNFGQQPVPGNT). The Nuclear matrix targeting sequence (NMTS) signature appears at 224 to 278 (YYANVSAAKCQEFGRWYKHFKKTKDMMVEMDSLSELSQQGANHVNFGQQPVPGNT). Polar residues predominate over residues 266–296 (HVNFGQQPVPGNTAEQPPSPAQLSHGSQPSV). Positions 266 to 307 (HVNFGQQPVPGNTAEQPPSPAQLSHGSQPSVRTPLPNLHPGL) are disordered. Positions 361-448 (LEQQVSTNTE…ERDRIYQDER (88 aa)) form a DNA-binding region, CUT 1. Residues glutamine 390, 400-410 (RTQGLLSEILR), and asparagine 425 contribute to the DNA site. The segment at 450-474 (RSLNAASAMGPAPLLSTPPSRPPQV) is disordered. Residues 484-571 (NGKPENNTMN…ERDAIYEQES (88 aa)) constitute a DNA-binding region (CUT 2). Residues 591-650 (QIQQQQQQQQQQQQQQQPPPPPPQPQPQPQAGPRLPPRQPTVASSAESDEENRQKTRPRT) form a disordered region. Residues 593–606 (QQQQQQQQQQQQQQ) show a composition bias toward low complexity. Over residues 607-629 (QPPPPPPQPQPQPQAGPRLPPRQ) the composition is skewed to pro residues. Serine 638 is subject to Phosphoserine. A DNA-binding region (homeobox) is located at residues 646–705 (TRPRTKISVEALGILQSFIQDVGLYPDEEAIQTLSAQLDLPKYTIIKFFQNQRYYLKHHG). Lysine 745 participates in a covalent cross-link: Glycyl lysine isopeptide (Lys-Gly) (interchain with G-Cter in SUMO).

This sequence belongs to the CUT homeobox family. As to quaternary structure, interacts with PCAF. Interacts with sumoylated PML and HDAC1 Tat via the CMP domain. Also interacts with DYNLT3 and POLR2J2. Binds to EP300. Homodimer. Part of the nuclear protein complex gamma-globin promoter and enhancer binding factor (gamma-PE) composed at least of SATB1 and HOXB2. Interaction with CtBP1 when not acetylated stabilizes attachment to DNA and promotes transcription repression. Interacts with CUX1 (via DNA-binding domains); the interaction inhibits the attachment of both proteins to DNA. In terms of processing, sumoylated. Sumoylation promotes cleavage by caspases. Post-translationally, phosphorylated by PKC. Acetylated by PCAF. Phosphorylated form interacts with HDAC1, but unphosphorylated form interacts with PCAF. DNA binding properties are activated by phosphorylation and inactivated by acetylation. In opposition, gene expression is down-regulated by phosphorylation but up-regulated by acetylation. Cleaved at Asp-254 by caspase-3 and caspase-6 during T-cell apoptosis in thymus and during B-cell stimulation. The cleaved forms cannot dimerize and lose transcription regulation function because of impaired DNA and chromatin association. Expressed in the subventricular zone, rostral migratory stream and in the olfactory bulb (at protein level). Mainly expressed in thymus, spleen, and lymph nodes with a lower level observed in the brain.

It is found in the nucleus. It localises to the PML body. Its function is as follows. Required for the switching of fetal globin species, and beta- and gamma-globin genes regulation during erythroid differentiation. Plays a role in chromatin organization and nuclear architecture during apoptosis. Crucial silencing factor contributing to the initiation of X inactivation mediated by Xist RNA that occurs during embryogenesis and in lymphoma. Binds to DNA at special AT-rich sequences, the consensus SATB1-binding sequence (CSBS), at nuclear matrix- or scaffold-associated regions. Thought to recognize the sugar-phosphate structure of double-stranded DNA. Transcriptional repressor controlling nuclear and viral gene expression in a phosphorylated and acetylated status-dependent manner, by binding to matrix attachment regions (MARs) of DNA and inducing a local chromatin-loop remodeling. Acts as a docking site for several chromatin remodeling enzymes and also by recruiting corepressors (HDACs) or coactivators (HATs) directly to promoters and enhancers. Modulates genes that are essential in the maturation of the immune T-cell CD8SP from thymocytes. Promotes neuronal differentiation of neural stem/progenitor cells in the adult subventricular zone, possibly by positively regulating the expression of NEUROD1. The chain is DNA-binding protein SATB1 (Satb1) from Mus musculus (Mouse).